The sequence spans 413 residues: Serine/threonine-protein phosphatase 7 (413 aa).

Residues cysteine 28 and cysteine 67 are joined by a disulfide bond. Aspartate 84, histidine 86, aspartate 113, and asparagine 145 together coordinate Mn(2+). Catalysis depends on histidine 146, which acts as the Proton donor. The Mn(2+) site is built by histidine 197 and histidine 303. The interval 391–413 (NVIDSDDEMDKSAMDTNNEQPNS) is disordered. Residues 404–413 (MDTNNEQPNS) show a composition bias toward polar residues.

Belongs to the PPP phosphatase family. PP-7 subfamily. Monomer, homodimer, and heteromer. Interacts with calmodulin (CaM3 and CaM4) and HSFA1A/HSF1. It depends on Mn(2+) as a cofactor. In terms of tissue distribution, expressed in leaves, and, to a lower extent, in stems and flowers.

Its subcellular location is the nucleus. The protein resides in the nucleoplasm. The catalysed reaction is O-phospho-L-seryl-[protein] + H2O = L-seryl-[protein] + phosphate. It carries out the reaction O-phospho-L-threonyl-[protein] + H2O = L-threonyl-[protein] + phosphate. Inhibited by NaF and orthovanadate, as well as by divalent cations such as Ni(2+) and Zn(2+). Inhibited by polylysine with myelin basic protein as substrate, but activated by polylysine with pNPP as substrate. Reversibly regulated by redox agents. Inhibited by submillimolar Pi concentrations. Slightly repressed by calmodulin (CaM). Its function is as follows. Phosphatase active on para-nitrophenylphosphate (pNPP) and on various phosphoproteins such as myelin basic protein. Seems to act as a positive regulator of cryptochrome signaling involved in hypocotyl growth inhibition and cotyledon expansion under white and blue light conditions. Confers thermotolerance. Required for heat shock mediated-signaling pathway that leads to the expression of heat shock proteins (HSPs). The chain is Serine/threonine-protein phosphatase 7 (PP7) from Arabidopsis thaliana (Mouse-ear cress).